Reading from the N-terminus, the 300-residue chain is Tetrahydromethanopterin S-methyltransferase subunit E (300 aa).

6 helical membrane-spanning segments follow: residues 62–82, 86–106, 135–155, 158–178, 226–246, and 261–281; these read PVSY…LMGM, PILA…AYSV, PIVG…YLAV, LGNP…VGAI, YFCS…IIFL, and LITK…TTLL.

The protein belongs to the MtrE family. The complex is composed of 8 subunits; MtrA, MtrB, MtrC, MtrD, MtrE, MtrF, MtrG and MtrH.

Its subcellular location is the cell membrane. The enzyme catalyses 5-methyl-5,6,7,8-tetrahydromethanopterin + coenzyme M + 2 Na(+)(in) = 5,6,7,8-tetrahydromethanopterin + methyl-coenzyme M + 2 Na(+)(out). Its pathway is one-carbon metabolism; methanogenesis from CO(2); methyl-coenzyme M from 5,10-methylene-5,6,7,8-tetrahydromethanopterin: step 2/2. Part of a complex that catalyzes the formation of methyl-coenzyme M and tetrahydromethanopterin from coenzyme M and methyl-tetrahydromethanopterin. This is an energy-conserving, sodium-ion translocating step. The sequence is that of Tetrahydromethanopterin S-methyltransferase subunit E from Methanococcus aeolicus (strain ATCC BAA-1280 / DSM 17508 / OCM 812 / Nankai-3).